The following is a 362-amino-acid chain: Vignain (362 aa).

The first 20 residues, 1-20, serve as a signal peptide directing secretion; that stretch reads MATKKLLWVVLSFSLVLGVA. Positions 21 to 131 are cleaved as a propeptide — activation peptide; sequence NSFDFHDKDL…YEKVVSVPPS (111 aa). 3 disulfides stabilise this stretch: cysteine 149–cysteine 191, cysteine 183–cysteine 224, and cysteine 282–cysteine 334. The active site involves cysteine 152. Residues histidine 288 and asparagine 309 contribute to the active site. Asparagine 326 and asparagine 346 each carry an N-linked (GlcNAc...) asparagine glycan. A Prevents secretion from ER motif is present at residues 359–362; that stretch reads KDEL.

The protein belongs to the peptidase C1 family. Monomer.

The protein localises to the endoplasmic reticulum lumen. Thought to be involved in the hydrolysis of stored seed proteins. This Phaseolus vulgaris (Kidney bean) protein is Vignain.